Here is a 515-residue protein sequence, read N- to C-terminus: MDEFHRYGKEDSSWQQCFLYPLFFQEDLYAISHDHYLDGSSSSEPMEHLSSNDQFSFLTVKRLIGQIRQQNHSIVLFVNCDPNPLVDRKKSSYSESVLEGLTLVLEVPFSIRSKYSVEGMNEWKSFRSIHSIFPFLEDKFPHSNYVSDTRIPYSIHPEILVRTFRRWIGDAPSLHPLRSILYEYRNSSESLQRSIIVVPKVNTRFFLFLWNNYVYECESILVSLLKRSSHSRSLSHGSFPQRTHFHRKIKNIFLFSRRNSFQSIWSLKDPNIHYVRYGERSIIAIKGTHLLVKKYRYYLPIFRQCYFHLWNEPYRVCSHQLSKNCSSSLGYFLRVRMKPLLVKTKMLDELFIADLITDEFDPIVPIVPIIGLLSREKFCDISGRPISKLSWTSLTDDDILDRFDRIWRNLFHYYSGSFGRDGLYRIKYILSLSCAKTLACKHKSTIRVVRKELGPELFKKSFSKERELDSPPFSSKAAARSQRERIWHSDIPQINPLAHSWQKIQDLKIENLFDQ.

The protein belongs to the intron maturase 2 family. MatK subfamily.

Its subcellular location is the plastid. The protein localises to the chloroplast. Usually encoded in the trnK tRNA gene intron. Probably assists in splicing its own and other chloroplast group II introns. In Picea pungens (Colorado spruce), this protein is Maturase K.